A 153-amino-acid polypeptide reads, in one-letter code: Myosin regulatory light chain (153 aa).

Ala1 bears the Blocked amino end (Ala) mark. EF-hand domains lie at Lys15 to Thr50 and Asp81 to Asn116. Positions 28, 30, 32, and 39 each coordinate Ca(2+).

In terms of biological role, in molluscan muscle, calcium regulation is associated with myosin rather than with actin. Muscle myosin contains two types of light chains: the catalytic light chain, essential for ATPase activity, and the regulatory light chain, a calcium-binding protein responsible for Ca(2+) dependent binding and Ca(2+) dependent Mg-ATPase activity. This Patinopecten sp. (Scallop) protein is Myosin regulatory light chain.